The chain runs to 82 residues: Large ribosomal subunit protein uL23 (82 aa).

The protein belongs to the universal ribosomal protein uL23 family. In terms of assembly, part of the 50S ribosomal subunit. Contacts protein L29.

Binds to 23S rRNA. One of the proteins that surrounds the polypeptide exit tunnel on the outside of the ribosome. The chain is Large ribosomal subunit protein uL23 from Methanosarcina barkeri (strain Fusaro / DSM 804).